A 577-amino-acid chain; its full sequence is F-box/TPR repeat protein pof3 (577 aa).

TPR repeat units lie at residues 6–39, 41–74, and 76–108; these read VKAIKEKTQQYLSKRKFEDALTFITKTIEQEPNP, IDLFELRAQVYEKSGQYSQAELDAKRMIHLNARN, and RGYLRLGKLLQLDGFDKKADQLYTQGLRMVHKM. The 43-residue stretch at 138 to 180 folds into the F-box domain; it reads ILPREVLLCILQQLNFKSIVQCMQVCKHWRDCIKKEPSLFCCL.

As to quaternary structure, a part of the E3 ubiquitin ligase Skp1-Cullin-1-F-box (SCF) complex. Interacts with cul1, mcl1 and skp1.

The protein resides in the mitochondrion. The protein localises to the nucleus. Has a role in substrate recognition in the Skp1-Cullin-1/Cdc53-F-box (SCF) ubiquitin ligase complex. Required for the maintenance of telomere length and transcriptional silencing at the telomere. Also required for chromosome segregation. This is F-box/TPR repeat protein pof3 (pof3) from Schizosaccharomyces pombe (strain 972 / ATCC 24843) (Fission yeast).